We begin with the raw amino-acid sequence, 384 residues long: S-adenosylmethionine synthase (384 aa).

His-15 serves as a coordination point for ATP. Asp-17 serves as a coordination point for Mg(2+). Glu-43 lines the K(+) pocket. L-methionine-binding residues include Glu-56 and Gln-99. Positions 99–109 (QSPDINQGVDR) are flexible loop. ATP contacts are provided by residues 164 to 166 (DAK), 230 to 231 (RF), Asp-239, 245 to 246 (RK), Ala-262, and Lys-266. Residue Asp-239 participates in L-methionine binding. Residue Lys-270 participates in L-methionine binding.

It belongs to the AdoMet synthase family. In terms of assembly, homotetramer; dimer of dimers. Mg(2+) is required as a cofactor. K(+) serves as cofactor.

The protein localises to the cytoplasm. It catalyses the reaction L-methionine + ATP + H2O = S-adenosyl-L-methionine + phosphate + diphosphate. It functions in the pathway amino-acid biosynthesis; S-adenosyl-L-methionine biosynthesis; S-adenosyl-L-methionine from L-methionine: step 1/1. Functionally, catalyzes the formation of S-adenosylmethionine (AdoMet) from methionine and ATP. The overall synthetic reaction is composed of two sequential steps, AdoMet formation and the subsequent tripolyphosphate hydrolysis which occurs prior to release of AdoMet from the enzyme. This chain is S-adenosylmethionine synthase, found in Salmonella gallinarum (strain 287/91 / NCTC 13346).